The primary structure comprises 89 residues: Co-chaperonin GroES (89 aa).

The protein belongs to the GroES chaperonin family. Heptamer of 7 subunits arranged in a ring. Interacts with the chaperonin GroEL.

It localises to the cytoplasm. Its function is as follows. Together with the chaperonin GroEL, plays an essential role in assisting protein folding. The GroEL-GroES system forms a nano-cage that allows encapsulation of the non-native substrate proteins and provides a physical environment optimized to promote and accelerate protein folding. GroES binds to the apical surface of the GroEL ring, thereby capping the opening of the GroEL channel. This chain is Co-chaperonin GroES, found in Pseudothermotoga lettingae (strain ATCC BAA-301 / DSM 14385 / NBRC 107922 / TMO) (Thermotoga lettingae).